Reading from the N-terminus, the 345-residue chain is Fructose-1,6-bisphosphatase class 1 1 (345 aa).

The Mg(2+) site is built by Glu-90, Asp-109, Leu-111, and Asp-112. Residues 112 to 115 (DGSS) and Asn-200 contribute to the substrate site. Glu-272 is a Mg(2+) binding site.

This sequence belongs to the FBPase class 1 family. In terms of assembly, homotetramer. Mg(2+) is required as a cofactor.

The protein resides in the cytoplasm. The enzyme catalyses beta-D-fructose 1,6-bisphosphate + H2O = beta-D-fructose 6-phosphate + phosphate. It functions in the pathway carbohydrate biosynthesis; gluconeogenesis. In Nitrobacter hamburgensis (strain DSM 10229 / NCIMB 13809 / X14), this protein is Fructose-1,6-bisphosphatase class 1 1.